The following is a 102-amino-acid chain: MYAVFQSGGKQHRVSEGQTIRLEKLDIATGETVEFDQVLMVANGDDIKIGAPVVEGVKIKAEVVAHGRGEKIKIVKFRRRKHSRKQQGHRQWFTDVKITGIA.

Belongs to the bacterial ribosomal protein bL21 family. As to quaternary structure, part of the 50S ribosomal subunit. Contacts protein L20.

In terms of biological role, this protein binds to 23S rRNA in the presence of protein L20. This Photorhabdus laumondii subsp. laumondii (strain DSM 15139 / CIP 105565 / TT01) (Photorhabdus luminescens subsp. laumondii) protein is Large ribosomal subunit protein bL21.